We begin with the raw amino-acid sequence, 483 residues long: ATP-dependent protease ATPase subunit HslU (483 aa).

ATP is bound by residues V18 and G60–E65. 2 stretches are compositionally biased toward low complexity: residues L136–Q147 and A171–P181. The tract at residues L136–V212 is disordered. The span at T182–R191 shows a compositional bias: polar residues. Basic and acidic residues predominate over residues S192 to D209. Residues D296, E361, and R433 each contribute to the ATP site.

It belongs to the ClpX chaperone family. HslU subfamily. As to quaternary structure, a double ring-shaped homohexamer of HslV is capped on each side by a ring-shaped HslU homohexamer. The assembly of the HslU/HslV complex is dependent on binding of ATP.

It localises to the cytoplasm. Functionally, ATPase subunit of a proteasome-like degradation complex; this subunit has chaperone activity. The binding of ATP and its subsequent hydrolysis by HslU are essential for unfolding of protein substrates subsequently hydrolyzed by HslV. HslU recognizes the N-terminal part of its protein substrates and unfolds these before they are guided to HslV for hydrolysis. This chain is ATP-dependent protease ATPase subunit HslU, found in Nitratidesulfovibrio vulgaris (strain DSM 19637 / Miyazaki F) (Desulfovibrio vulgaris).